The sequence spans 435 residues: uncharacterized protein (435 aa).

WD repeat units follow at residues D105–S149, H164–Q204, and A207–I247. A Phosphoserine modification is found at S266. The stretch at G313–P353 is one WD 4 repeat. A disordered region spans residues S352–S371. The span at S358 to S371 shows a compositional bias: low complexity. S388 is subject to Phosphoserine.

The protein resides in the cytoplasm. The protein localises to the golgi apparatus. This is an uncharacterized protein from Schizosaccharomyces pombe (strain 972 / ATCC 24843) (Fission yeast).